The following is a 123-amino-acid chain: Large ribosomal subunit protein bL12 (123 aa).

It belongs to the bacterial ribosomal protein bL12 family. As to quaternary structure, homodimer. Part of the ribosomal stalk of the 50S ribosomal subunit. Forms a multimeric L10(L12)X complex, where L10 forms an elongated spine to which 2 to 4 L12 dimers bind in a sequential fashion. Binds GTP-bound translation factors.

Functionally, forms part of the ribosomal stalk which helps the ribosome interact with GTP-bound translation factors. Is thus essential for accurate translation. The chain is Large ribosomal subunit protein bL12 from Marinomonas sp. (strain MWYL1).